The primary structure comprises 285 residues: Pantothenate synthetase (285 aa).

ATP is bound at residue 30-37; it reads MGFLHEGH. Catalysis depends on H37, which acts as the Proton donor. A (R)-pantoate-binding site is contributed by Q61. Position 61 (Q61) interacts with beta-alanine. 147–150 contacts ATP; sequence GQKD. Q153 is a (R)-pantoate binding site. Residues V176 and 184–187 each bind ATP; that span reads KSSR.

It belongs to the pantothenate synthetase family. As to quaternary structure, homodimer.

It localises to the cytoplasm. It carries out the reaction (R)-pantoate + beta-alanine + ATP = (R)-pantothenate + AMP + diphosphate + H(+). The protein operates within cofactor biosynthesis; (R)-pantothenate biosynthesis; (R)-pantothenate from (R)-pantoate and beta-alanine: step 1/1. In terms of biological role, catalyzes the condensation of pantoate with beta-alanine in an ATP-dependent reaction via a pantoyl-adenylate intermediate. This is Pantothenate synthetase from Listeria welshimeri serovar 6b (strain ATCC 35897 / DSM 20650 / CCUG 15529 / CIP 8149 / NCTC 11857 / SLCC 5334 / V8).